A 163-amino-acid chain; its full sequence is Nucleotide-binding protein HS_0688 (163 aa).

Belongs to the YajQ family.

In terms of biological role, nucleotide-binding protein. This chain is Nucleotide-binding protein HS_0688, found in Histophilus somni (strain 129Pt) (Haemophilus somnus).